The primary structure comprises 281 residues: ATP synthase subunit a (281 aa).

6 helical membrane passes run 50–70 (FSFT…LLLV), 116–136 (FFPC…QGMI), 145–165 (HFLI…IVGF), 172–192 (FLSF…LVLL), 219–239 (VKIL…FYFI), and 246–266 (FIVL…AYVF).

Belongs to the ATPase A chain family. F-type ATPases have 2 components, CF(1) - the catalytic core - and CF(0) - the membrane proton channel. CF(1) has five subunits: alpha(3), beta(3), gamma(1), delta(1), epsilon(1). CF(0) has three main subunits: a, b and c.

It localises to the mitochondrion inner membrane. Functionally, mitochondrial membrane ATP synthase (F(1)F(0) ATP synthase or Complex V) produces ATP from ADP in the presence of a proton gradient across the membrane which is generated by electron transport complexes of the respiratory chain. F-type ATPases consist of two structural domains, F(1) - containing the extramembraneous catalytic core and F(0) - containing the membrane proton channel, linked together by a central stalk and a peripheral stalk. During catalysis, ATP synthesis in the catalytic domain of F(1) is coupled via a rotary mechanism of the central stalk subunits to proton translocation. Key component of the proton channel; it may play a direct role in the translocation of protons across the membrane. The polypeptide is ATP synthase subunit a (ATP6) (Oenothera berteroana (Bertero's evening primrose)).